The primary structure comprises 427 residues: Vitamin D3 receptor (427 aa).

Positions 21 to 96 (PRICGVCGDR…IGMMKEFILT (76 aa)) form a DNA-binding region, nuclear receptor. The Zn(2+) site is built by cysteine 24, cysteine 27, cysteine 41, cysteine 44, cysteine 60, cysteine 66, cysteine 76, and cysteine 79. NR C4-type zinc fingers lie at residues 24-44 (CGVC…CEGC) and 60-84 (CPFN…LKRC). The interval 97 to 126 (DEEVQRKREMILKRKEEEALKDSLRPKLSE) is hinge. Residues 127–423 (EQQRIIAILL…LTPLVLEVFG (297 aa)) enclose the NR LBD domain. Tyrosine 143 is a binding site for calcitriol. Residues 158–183 (RVNDGGGSHPSRPNSRHTPSFSGDSS) form a disordered region. Serine 237 lines the calcitriol pocket. Positions 246 to 264 (KMIPGFRDLTSEDQIVLLK) are interaction with coactivator LXXLL motif. Arginine 274, serine 278, histidine 305, and histidine 397 together coordinate calcitriol. The 9aaTAD motif lies at 416 to 424 (PLVLEVFGN).

Belongs to the nuclear hormone receptor family. NR1 subfamily. Homodimer in the absence of bound vitamin D3. Heterodimer with RXRA after vitamin D3 binding. Interacts with MED1, NCOA1, NCOA2, NCOA3 and NCOA6 coactivators, leading to a strong increase of transcription of target genes. Interacts with the corepressor NCOR1. Interacts with SNW1. Interacts with IRX4, the interaction does not affect its transactivation activity. Ubiquitinated by UBR5, leading to its degradation: UBR5 specifically recognizes and binds ligand-bound VDR when it is not associated with coactivators (NCOAs). In presence of NCOAs, the UBR5-degron is not accessible, preventing its ubiquitination and degradation.

The protein resides in the nucleus. It localises to the cytoplasm. Nuclear receptor for calcitriol, the active form of vitamin D3 which mediates the action of this vitamin on cells. Enters the nucleus upon vitamin D3 binding where it forms heterodimers with the retinoid X receptor/RXR. The VDR-RXR heterodimers bind to specific response elements on DNA and activate the transcription of vitamin D3-responsive target genes. Plays a central role in calcium homeostasis. The protein is Vitamin D3 receptor (VDR) of Saguinus oedipus (Cotton-top tamarin).